Here is a 190-residue protein sequence, read N- to C-terminus: ATP synthase subunit delta (190 aa).

It belongs to the ATPase delta chain family. F-type ATPases have 2 components, F(1) - the catalytic core - and F(0) - the membrane proton channel. F(1) has five subunits: alpha(3), beta(3), gamma(1), delta(1), epsilon(1). F(0) has three main subunits: a(1), b(2) and c(10-14). The alpha and beta chains form an alternating ring which encloses part of the gamma chain. F(1) is attached to F(0) by a central stalk formed by the gamma and epsilon chains, while a peripheral stalk is formed by the delta and b chains.

It localises to the cell inner membrane. Its function is as follows. F(1)F(0) ATP synthase produces ATP from ADP in the presence of a proton or sodium gradient. F-type ATPases consist of two structural domains, F(1) containing the extramembraneous catalytic core and F(0) containing the membrane proton channel, linked together by a central stalk and a peripheral stalk. During catalysis, ATP synthesis in the catalytic domain of F(1) is coupled via a rotary mechanism of the central stalk subunits to proton translocation. Functionally, this protein is part of the stalk that links CF(0) to CF(1). It either transmits conformational changes from CF(0) to CF(1) or is implicated in proton conduction. This Methylobacterium radiotolerans (strain ATCC 27329 / DSM 1819 / JCM 2831 / NBRC 15690 / NCIMB 10815 / 0-1) protein is ATP synthase subunit delta.